A 374-amino-acid polypeptide reads, in one-letter code: 4-galactosyl-N-acetylglucosaminide 3-alpha-L-fucosyltransferase FUT5 (374 aa).

Over 1-15 the chain is Cytoplasmic; that stretch reads MDLLGAAKPQWPWRR. The chain crosses the membrane as a helical; Signal-anchor for type II membrane protein span at residues 16-34; the sequence is CLAGLLFQLLVAVCFFSYL. Topologically, residues 35 to 374 are lumenal; the sequence is RVSRDDATGS…TVRSIAAWFN (340 aa). N-linked (GlcNAc...) asparagine glycosylation is found at N60, N105, N167, and N198.

It belongs to the glycosyltransferase 10 family.

It localises to the golgi apparatus. It is found in the golgi stack membrane. It catalyses the reaction a beta-D-galactosyl-(1-&gt;3)-N-acetyl-beta-D-glucosaminyl derivative + GDP-beta-L-fucose = a beta-D-galactosyl-(1-&gt;3)-[alpha-L-fucosyl-(1-&gt;4)]-N-acetyl-beta-D-glucosaminyl derivative + GDP + H(+). The catalysed reaction is an N-acetyl-alpha-neuraminyl-(2-&gt;3)-beta-D-galactosyl-(1-&gt;4)-N-acetyl-beta-D-glucosaminyl derivative + GDP-beta-L-fucose = an alpha-Neu5Ac-(2-&gt;3)-beta-D-Gal-(1-&gt;4)-[alpha-L-Fuc-(1-&gt;3)]-beta-D-GlcNAc derivative + GDP + H(+). It carries out the reaction an alpha-Neu5Ac-(2-&gt;3)-beta-D-Gal-(1-&gt;4)-beta-D-GlcNAc-(1-&gt;3)-beta-D-Gal-(1-&gt;4)-[alpha-L-Fuc-(1-&gt;3)]-beta-D-GlcNAc derivative + GDP-beta-L-fucose = an alpha-Neu5Ac-(2-&gt;3)-beta-D-Gal-(1-&gt;4)-[alpha-L-Fuc-(1-&gt;3)]-beta-D-GlcNAc-(1-&gt;3)-beta-D-Gal-(1-&gt;4)-[alpha-L-Fuc-(1-&gt;3)]-beta-D-GlcNAc derivative + GDP + H(+). The enzyme catalyses a beta-D-galactosyl-(1-&gt;4)-N-acetyl-beta-D-glucosaminyl derivative + GDP-beta-L-fucose = a beta-D-galactosyl-(1-&gt;4)-[alpha-L-fucosyl-(1-&gt;3)]-N-acetyl-beta-D-glucosaminyl derivative + GDP + H(+). It catalyses the reaction a neolactoside nLc4Cer + GDP-beta-L-fucose = a neolactoside III(3)-alpha-Fuc-nLc4Cer + GDP + H(+). The catalysed reaction is a neolactoside nLc6Cer + GDP-beta-L-fucose = beta-D-galactosyl-(1-&gt;4)-N-acetyl-beta-D-glucosaminyl-(1-&gt;3)-beta-D-galactosyl-(1-&gt;4)-[alpha-L-fucosyl-(1-&gt;3)]-N-acetyl-beta-D-glucosaminyl-(1-&gt;3)-beta-D-galactosyl-(1-&gt;4)-beta-D-glucosyl-(1&lt;-&gt;1')-ceramide + GDP + H(+). It carries out the reaction a neolactoside nLc6Cer(d18:1(4E)) + GDP-beta-L-fucose = a neolactoside III(3)-alpha-Fuc-nLc6Cer(d18:1(4E)) + GDP + H(+). The enzyme catalyses a neolactoside nLc4Cer(d18:1(4E)) + GDP-beta-L-fucose = a neolactoside III(3)-alpha-Fuc-nLc4Cer(d18:1(4E)) + GDP + H(+). It catalyses the reaction a neolactoside VI(3)-alpha-NeuNAc-nLc6Cer + GDP-beta-L-fucose = a neolactoside VI(3)-alpha-NeuAc,III(3)-alphaFuc-nLc6Cer + GDP + H(+). The catalysed reaction is beta-D-galactosyl-(1-&gt;4)-N-acetyl-D-glucosamine + GDP-beta-L-fucose = beta-D-galactosyl-(1-&gt;4)-[alpha-L-fucosyl-(1-&gt;3)]-N-acetyl-D-glucosamine + GDP + H(+). It carries out the reaction N-acetyl-alpha-neuraminosyl-(2-&gt;3)-beta-D-galactosyl-(1-&gt;4)-N-acetyl-beta-D-glucosamine + GDP-beta-L-fucose = N-acetyl-alpha-neuraminosyl-(2-&gt;3)-beta-D-galactosyl-(1-&gt;4)-[alpha-L-fucosyl-(1-&gt;3)]-N-acetyl-beta-D-glucosamine + GDP + H(+). The enzyme catalyses alpha-L-Fuc-(1-&gt;2)-beta-D-Gal-(1-&gt;4)-D-GlcNAc + GDP-beta-L-fucose = alpha-L-Fuc-(1-&gt;2)-beta-D-Gal-(1-&gt;4)-[alpha-L-Fuc-(1-&gt;3)]-D-GlcNAc + GDP + H(+). It catalyses the reaction an alpha-Neu5Ac-(2-&gt;3)-beta-D-Gal-(1-&gt;3)-D-GlcNAc derivative + GDP-beta-L-fucose = an alpha-Neu5Ac-(2-&gt;3)-beta-D-Gal-(1-&gt;3)-[alpha-L-Fuc-(1-&gt;4)]-beta-D-GlcNAc derivative + GDP + H(+). Its pathway is protein modification; protein glycosylation. In terms of biological role, catalyzes preferentially the transfer of L-fucose, from a guanosine diphosphate-beta-L-fucose, to the N-acetyl-beta-D-glucosamine (GlcNAc) of an N-acetyllactosamine unit (type 2 chain) of an oligosaccharide, or a glycoprotein- and a glycolipid-linked N-acetyllactosamine unit via an alpha (1,3) linkage and participates in the surface expression of VIM-2, Lewis X/SSEA-1 and sialyl Lewis X antigens. Preferentially transfers fucose to the GlcNAc of an internal N-acetyllactosamine unit of a poly-N-acetyllactosamine chain acceptor substrate. Also catalyzes to a lesser extend the transfer of L-fucose to the GlcNAc of a type 1 (beta-D-galactosyl-(1-&gt;3)-N-acetyl-beta-D-glucosaminyl) or H-type 1 (alpha-L-Fuc-(1-&gt;2)-beta-D-Gal-(1-&gt;3)-D-GlcNAc) chain oligosaccharide via an alpha (1,4) linkage. Preferentially catalyzes sialylated type 2 oligosaccharide acceptors over neutral type 2 or H type 2 (alpha-L-Fuc-(1-&gt;2)-beta-D-Gal-(1-&gt;4)-D-GlcNAc) oligosaccharide acceptors. Lactose-based structures are also acceptor substrates. The sequence is that of 4-galactosyl-N-acetylglucosaminide 3-alpha-L-fucosyltransferase FUT5 from Hylobates lar (Lar gibbon).